The primary structure comprises 190 residues: Interferon alpha-11 (190 aa).

An N-terminal signal peptide occupies residues 1 to 23 (MARLCAFLMILIVMSYWSTCSLG). 2 disulfides stabilise this stretch: C24-C122 and C52-C162. N101 carries an N-linked (GlcNAc...) asparagine glycan.

This sequence belongs to the alpha/beta interferon family. Post-translationally, N-glycosylated.

Its subcellular location is the secreted. Functionally, has antiviral and antiproliferative activities. Produced by macrophages and stimulates the production of two enzymes: a protein kinase and an oligoadenylate synthetase. During viral infection, mediates antiviral effect, either directly by inducing interferon-stimulated genes, either indirectly through stimulation of natural killer cells enabling them to control viral replication. This Mus musculus (Mouse) protein is Interferon alpha-11 (Ifna11).